A 217-amino-acid chain; its full sequence is Protein LURP-one-related 2 (217 aa).

The protein belongs to the LOR family.

In terms of biological role, might be related to the phospholipid scramblase and tubby-like superfamily of membrane tethered transcription factors. The polypeptide is Protein LURP-one-related 2 (Arabidopsis thaliana (Mouse-ear cress)).